The following is a 129-amino-acid chain: Follitropin subunit beta (129 aa).

The first 18 residues, 1 to 18 (MKSVQFCFLFCCWRAICC), serve as a signal peptide directing secretion. 6 cysteine pairs are disulfide-bonded: Cys21–Cys69, Cys35–Cys84, Cys38–Cys122, Cys46–Cys100, Cys50–Cys102, and Cys105–Cys112. Asn25 and Asn42 each carry an N-linked (GlcNAc...) asparagine glycan.

This sequence belongs to the glycoprotein hormones subunit beta family. In terms of assembly, heterodimer. The active follitropin is a heterodimer composed of an alpha chain/CGA shared with other hormones and a unique beta chain/FSHB shown here.

It is found in the secreted. Functionally, together with the alpha chain CGA constitutes follitropin, the follicle-stimulating hormone, and provides its biological specificity to the hormone heterodimer. Binds FSHR, a G protein-coupled receptor, on target cells to activate downstream signaling pathways. Follitropin is involved in follicle development and spermatogenesis in reproductive organs. The protein is Follitropin subunit beta (FSHB) of Capra hircus (Goat).